Reading from the N-terminus, the 148-residue chain is Ribonuclease H (148 aa).

The region spanning 3 to 144 (DKEQVVIYTD…ADQLANRGVA (142 aa)) is the RNase H type-1 domain. The Mg(2+) site is built by Asp12, Glu50, Asp72, and Asp136. A disordered region spans residues 125–148 (GHTGDPGNERADQLANRGVAELPR).

Belongs to the RNase H family. In terms of assembly, monomer. Requires Mg(2+) as cofactor.

It localises to the cytoplasm. It catalyses the reaction Endonucleolytic cleavage to 5'-phosphomonoester.. In terms of biological role, endonuclease that specifically degrades the RNA of RNA-DNA hybrids. This Pseudomonas paraeruginosa (strain DSM 24068 / PA7) (Pseudomonas aeruginosa (strain PA7)) protein is Ribonuclease H.